A 271-amino-acid chain; its full sequence is Ribosomal RNA small subunit methyltransferase A (271 aa).

Residues histidine 11, leucine 13, glycine 38, glutamate 58, aspartate 86, and asparagine 101 each contribute to the S-adenosyl-L-methionine site.

This sequence belongs to the class I-like SAM-binding methyltransferase superfamily. rRNA adenine N(6)-methyltransferase family. RsmA subfamily.

Its subcellular location is the cytoplasm. It carries out the reaction adenosine(1518)/adenosine(1519) in 16S rRNA + 4 S-adenosyl-L-methionine = N(6)-dimethyladenosine(1518)/N(6)-dimethyladenosine(1519) in 16S rRNA + 4 S-adenosyl-L-homocysteine + 4 H(+). Its function is as follows. Specifically dimethylates two adjacent adenosines (A1518 and A1519) in the loop of a conserved hairpin near the 3'-end of 16S rRNA in the 30S particle. May play a critical role in biogenesis of 30S subunits. In Helicobacter pylori (strain G27), this protein is Ribosomal RNA small subunit methyltransferase A.